Here is a 1476-residue protein sequence, read N- to C-terminus: Membrane-associated guanylate kinase, WW and PDZ domain-containing protein 3 (1476 aa).

The 91-residue stretch at 18–108 (CAVSWAGPPG…PIRLKTVKPG (91 aa)) folds into the PDZ 1 domain. An interaction with ADRB1 and TGFA region spans residues 18-108 (CAVSWAGPPG…PIRLKTVKPG (91 aa)). The region spanning 116–290 (RHYLSLQFQK…SSMDFRNYMM (175 aa)) is the Guanylate kinase-like domain. 123 to 130 (FQKGSIDH) provides a ligand contact to ATP. The interval 184–266 (TYDGNFYGTP…ETREMHSETS (83 aa)) is disordered. A compositionally biased stretch (pro residues) spans 193 to 204 (PKPPAEPSPFQP). Serine 236 carries the phosphoserine modification. Residues 238–247 (LPEEEEDEDK) are compositionally biased toward acidic residues. WW domains lie at 296-329 (EPLPKNWEMAYTDTGMIYFIDHNTKTTTWLDPRL) and 342-375 (GELPYGWEKIEDPQYGTYYVDHLNQKTQFENPVE). The region spanning 413–495 (RASLKKSTMG…NQYVNLTLCR (83 aa)) is the PDZ 2 domain. An interaction with PTEN region spans residues 413–495 (RASLKKSTMG…NQYVNLTLCR (83 aa)). Residues 551 to 575 (LASDRLNGPSESSEQRASLASSGSS) are disordered. Positions 559-575 (PSESSEQRASLASSGSS) are enriched in polar residues. Positions 581–657 (TIPLIKGPKG…GADVPLLILR (77 aa)) constitute a PDZ 3 domain. Position 598 is a phosphoserine (serine 598). The tract at residues 664 to 691 (TKTAKTKTDTKENSGSLETINEPIPQPM) is disordered. Residue serine 702 is modified to Phosphoserine. The PDZ 4 domain occupies 729–811 (DVFLRKQESG…NGHVLLTVRR (83 aa)). The segment at 729-811 (DVFLRKQESG…NGHVLLTVRR (83 aa)) is interaction with ADGRB1. The segment at 818 to 844 (KQPEDESHQAFSQNGSPRLNRAELPTR) is disordered. Phosphoserine is present on residues serine 833 and serine 916. The PDZ 5 domain occupies 852-939 (DVTLQRKENE…TVTLTVVAEE (88 aa)). Residues 852-939 (DVTLQRKENE…TVTLTVVAEE (88 aa)) form an interaction with LPAR2 and GRIN2B region. Residues 939-966 (EEHHGPPSGTNSARQSPALQHRPMGQAQ) are disordered. Over residues 946–956 (SGTNSARQSPA) the composition is skewed to polar residues. One can recognise a PDZ 6 domain in the interval 1022 to 1104 (PVELERGPRG…KVLLLLRPGT (83 aa)). 2 disordered regions span residues 1109–1151 (DHGD…ATED) and 1168–1476 (TVQE…DKQL). Over residues 1114–1123 (DTNSPSSSNV) the composition is skewed to polar residues. Basic and acidic residues-rich tracts occupy residues 1193–1211 (SKKDPPRGSGHGEKSRLKG) and 1230–1265 (RHSEEHLEKIPRPLKSDPKEKSRDRSLSPRKGESKG). The segment covering 1285-1304 (SSSPKKQQKIGGNSLSNTEG) has biased composition (polar residues). Composition is skewed to basic and acidic residues over residues 1317–1340 (HPRDSTEQLPDGREKSGVSRKDLK) and 1350–1361 (KSPEKKSSKVDE). Serine 1321 carries the phosphoserine modification. Residues 1363–1373 (SLPSKKTSSTA) are compositionally biased toward polar residues. Basic and acidic residues predominate over residues 1419-1437 (ADDHKGRESEVTDRCRERA).

This sequence belongs to the MAGUK family. As to quaternary structure, interacts with ADRB1, ADGRB1, LPAR2/EDG4, GRIN2B, PTEN, and PTPRB. Interacts with unidentified tyrosine phosphorylated proteins. Interacts with FZD4, FZD7, TGFA and VANGL2. Interacts with DLL1. Interacts with PRRG4 (via cytoplasmic domain). In terms of tissue distribution, widely expressed. Colocalizes with TGFA in neurons in the cortex and dentate gyrus, as well as in ependymal cells and some astrocytes (at protein level). Present in lens epithelium.

It is found in the cell membrane. Its subcellular location is the cell junction. It localises to the tight junction. The protein resides in the nucleus. In terms of biological role, acts as a scaffolding protein at cell-cell junctions, thereby regulating various cellular and signaling processes. Cooperates with PTEN to modulate the kinase activity of AKT1. Its interaction with PTPRB and tyrosine phosphorylated proteins suggests that it may link receptor tyrosine phosphatase with its substrates at the plasma membrane. In polarized epithelial cells, involved in efficient trafficking of TGFA to the cell surface. Regulates the ability of LPAR2 to activate ERK and RhoA pathways. Regulates the JNK signaling cascade via its interaction with FZD4 and VANGL2. In Mus musculus (Mouse), this protein is Membrane-associated guanylate kinase, WW and PDZ domain-containing protein 3 (Magi3).